A 502-amino-acid polypeptide reads, in one-letter code: Glycerol kinase (502 aa).

T14 provides a ligand contact to ADP. 3 residues coordinate ATP: T14, T15, and S16. T14 contributes to the sn-glycerol 3-phosphate binding site. Position 18 (R18) interacts with ADP. Sn-glycerol 3-phosphate-binding residues include R84, E85, and Y136. R84, E85, and Y136 together coordinate glycerol. The residue at position 232 (H232) is a Phosphohistidine; by HPr. Sn-glycerol 3-phosphate is bound at residue D246. Glycerol contacts are provided by D246 and Q247. 2 residues coordinate ADP: T268 and G311. The ATP site is built by T268, G311, Q315, and G412. The ADP site is built by G412 and N416.

It belongs to the FGGY kinase family. Homotetramer and homodimer (in equilibrium). Post-translationally, the phosphoenolpyruvate-dependent sugar phosphotransferase system (PTS), including enzyme I, and histidine-containing protein (HPr) are required for the phosphorylation, which leads to the activation of the enzyme.

The enzyme catalyses glycerol + ATP = sn-glycerol 3-phosphate + ADP + H(+). It participates in polyol metabolism; glycerol degradation via glycerol kinase pathway; sn-glycerol 3-phosphate from glycerol: step 1/1. With respect to regulation, activated by phosphorylation and inhibited by fructose 1,6-bisphosphate (FBP). Key enzyme in the regulation of glycerol uptake and metabolism. Catalyzes the phosphorylation of glycerol to yield sn-glycerol 3-phosphate. This Streptococcus pneumoniae (strain ATCC 700669 / Spain 23F-1) protein is Glycerol kinase.